The primary structure comprises 384 residues: Transcription factor iacI (384 aa).

It is found in the nucleus. Functionally, transcription factor; part of the gene cluster that mediates the biosynthesis of iso-A82775C, a enylepoxycyclohexane and biosynthetic precursor of the chloropestolide anticancer natural products. In Pestalotiopsis fici (strain W106-1 / CGMCC3.15140), this protein is Transcription factor iacI.